A 470-amino-acid polypeptide reads, in one-letter code: Glucose-1-phosphate adenylyltransferase large subunit 1 (470 aa).

It belongs to the bacterial/plant glucose-1-phosphate adenylyltransferase family. In terms of assembly, heterotetramer. As to expression, prominently expressed in the leaves and a weaker expression is seen in the tubers.

It localises to the plastid. Its subcellular location is the chloroplast. The protein resides in the amyloplast. It catalyses the reaction alpha-D-glucose 1-phosphate + ATP + H(+) = ADP-alpha-D-glucose + diphosphate. Its pathway is glycan biosynthesis; starch biosynthesis. With respect to regulation, activated by 3'phosphoglycerate, inhibited by orthophosphate. Allosteric regulation. This protein plays a role in synthesis of starch. It catalyzes the synthesis of the activated glycosyl donor, ADP-glucose from Glc-1-P and ATP. The chain is Glucose-1-phosphate adenylyltransferase large subunit 1 (AGPS1) from Solanum tuberosum (Potato).